The sequence spans 98 residues: UPF0235 protein CCNA_03737 (98 aa).

It belongs to the UPF0235 family.

The polypeptide is UPF0235 protein CCNA_03737 (Caulobacter vibrioides (strain NA1000 / CB15N) (Caulobacter crescentus)).